A 331-amino-acid chain; its full sequence is D-alanine--D-alanine ligase (331 aa).

The region spanning 122-328 (KLWYDAIGIP…FHEFLADCIE (207 aa)) is the ATP-grasp domain. 152–207 (AFDKWGKLFVKAARQGSSVGCYSVTKIEQLSDAIDKAFGFSHQVLVEKAVKPRELE) provides a ligand contact to ATP. Mg(2+) contacts are provided by Asp282, Glu295, and Asn297.

It belongs to the D-alanine--D-alanine ligase family. Requires Mg(2+) as cofactor. Mn(2+) is required as a cofactor.

The protein resides in the cytoplasm. It catalyses the reaction 2 D-alanine + ATP = D-alanyl-D-alanine + ADP + phosphate + H(+). It participates in cell wall biogenesis; peptidoglycan biosynthesis. Cell wall formation. This Vibrio vulnificus (strain CMCP6) protein is D-alanine--D-alanine ligase.